Here is a 254-residue protein sequence, read N- to C-terminus: 5'-nucleotidase SurE (254 aa).

Residues Asp8, Asp9, Ser39, and Asn91 each coordinate a divalent metal cation.

Belongs to the SurE nucleotidase family. It depends on a divalent metal cation as a cofactor.

Its subcellular location is the cytoplasm. It catalyses the reaction a ribonucleoside 5'-phosphate + H2O = a ribonucleoside + phosphate. In terms of biological role, nucleotidase that shows phosphatase activity on nucleoside 5'-monophosphates. This Methylibium petroleiphilum (strain ATCC BAA-1232 / LMG 22953 / PM1) protein is 5'-nucleotidase SurE.